A 354-amino-acid chain; its full sequence is Mitogen-activated protein kinase kinase 1 (354 aa).

One can recognise a Protein kinase domain in the interval 68–328; it reads LEVIKVIGKG…AKELLEHKFV (261 aa). Residues 74 to 82 and K97 each bind ATP; that span reads IGKGSSGNV. Catalysis depends on D190, which acts as the Proton acceptor. T218 bears the Phosphothreonine mark. S224 is subject to Phosphoserine. Residue T228 is modified to Phosphothreonine.

The protein belongs to the protein kinase superfamily. STE Ser/Thr protein kinase family. MAP kinase kinase subfamily. As to quaternary structure, interacts with MEKK1 and MPK4. May form a ternary complex composed of MEKK1 and MKK1/MKK2 and MPK4. Interacts with P.syringae type III effector HopF2. Interacts with MPK11. Post-translationally, phosphorylation at Thr-218 and Ser-224 by MAP kinase kinase kinases positively regulates kinase activity. As to expression, expressed in roots, stem, flowers and siliques.

The catalysed reaction is L-seryl-[protein] + ATP = O-phospho-L-seryl-[protein] + ADP + H(+). It carries out the reaction L-threonyl-[protein] + ATP = O-phospho-L-threonyl-[protein] + ADP + H(+). The enzyme catalyses L-tyrosyl-[protein] + ATP = O-phospho-L-tyrosyl-[protein] + ADP + H(+). Activated through serine and threonine phosphorylation in response to wounding, cold, drought, salt stresses, abscisic acid (ABA), hydrogen peroxide, bacterial flagellin and laminarin beta-glucan. Functionally, MEKK1, MKK1/MKK2 and MPK4/MPK6 function in a signaling pathway that modulates the expression of genes responding to biotic and abiotic stresses and also plays an important role in pathogen defense by negatively regulating innate immunity. Activates by phosphorylation the downstream MPK4. Acts redundantly with MKK2. MKK1-MPK6 module mediates abscisic acid (ABA)-dependent CAT1 expression with H(2)O(2) production and response to drought and salt stress. MKK1-MPK6 module is also involved in sugar signaling during the process of seed germination. This Arabidopsis thaliana (Mouse-ear cress) protein is Mitogen-activated protein kinase kinase 1 (MKK1).